Consider the following 152-residue polypeptide: MVILEQTHLVKNKAVDNKKSMKYSIFQQALTIAVILLISKIIESFMPIPMPASVIGLVLLFIALCTGIVKLGQVETVGTALTNNIGFLFVPAGISVINSLPILKQSPILIILLIIISTLLLLICTGFSSQLLVTKSLFPSKEKNEETSHIGG.

The next 4 helical transmembrane spans lie at tyrosine 23–glutamate 43, phenylalanine 45–cysteine 65, valine 77–isoleucine 97, and isoleucine 108–serine 128.

The protein belongs to the CidA/LrgA family. LrgA subfamily.

It localises to the cell membrane. In terms of biological role, inhibits the expression or activity of extracellular murein hydrolases by interacting, possibly with LrgB, with the holin-like proteins CidA and/or CidB. The LrgAB and CidAB proteins may affect the proton motive force of the membrane. May be involved in programmed cell death (PCD), possibly triggering PCD in response to antibiotics and environmental stresses. The chain is Antiholin-like protein LrgA from Staphylococcus epidermidis (strain ATCC 12228 / FDA PCI 1200).